The sequence spans 354 residues: Elongation factor Ts (354 aa).

An involved in Mg(2+) ion dislocation from EF-Tu region spans residues Thr81–Val84.

Belongs to the EF-Ts family.

The protein resides in the cytoplasm. In terms of biological role, associates with the EF-Tu.GDP complex and induces the exchange of GDP to GTP. It remains bound to the aminoacyl-tRNA.EF-Tu.GTP complex up to the GTP hydrolysis stage on the ribosome. This chain is Elongation factor Ts, found in Campylobacter curvus (strain 525.92).